A 380-amino-acid polypeptide reads, in one-letter code: Selenoprotein P (380 aa).

The N-terminal stretch at 1–19 (MWRSLGLALALCLLPYGGA) is a signal peptide. Residue Sec59 is a non-standard amino acid, selenocysteine. N-linked (GlcNAc...) asparagine glycosylation is found at Asn83, Asn176, and Asn195. The tract at residues 196–257 (KTAEPSEAHS…RGQHRQGHLE (62 aa)) is disordered. The span at 221–237 (SKPSENQQPGPSETTLP) shows a compositional bias: polar residues. A compositionally biased stretch (basic residues) spans 241-253 (LHHHHRHRGQHRQ). Residue Sec259 is a non-standard amino acid, selenocysteine. Ser264 is subject to Phosphoserine. Residues Sec277, Sec318, Sec330, and Sec352 are each a non-standard amino acid (selenocysteine). The interval 346-380 (RSPPAAUQNQPMNPMEANPNUSUDNQTRKUKUHSN) is disordered. The span at 348 to 360 (PPAAUQNQPMNPM) shows a compositional bias: low complexity. A glycan (N-linked (GlcNAc...) asparagine) is linked at Asn365. Non-standard amino acids (selenocysteine) are located at Sec366 and Sec368. Asn370 carries N-linked (GlcNAc...) asparagine glycosylation. 2 non-standard amino acids (selenocysteine) are found at residues Sec375 and Sec377.

This sequence belongs to the selenoprotein P family. In terms of processing, phosphorylation sites are present in the extracellular medium. In the kidney, expressed in the cortex with no expression observed in the medulla (at protein level). Expressed by the liver and secreted in plasma.

It is found in the secreted. In terms of biological role, might be responsible for some of the extracellular antioxidant defense properties of selenium or might be involved in the transport of selenium. May supply selenium to tissues such as brain and testis. The sequence is that of Selenoprotein P from Mus musculus (Mouse).